The sequence spans 126 residues: Glycine cleavage system H protein (126 aa).

In terms of domain architecture, Lipoyl-binding spans 23–104 (KVRVGITDFA…YDEGWMIEII (82 aa)). Lys-64 bears the N6-lipoyllysine mark.

It belongs to the GcvH family. The glycine cleavage system is composed of four proteins: P, T, L and H. (R)-lipoate serves as cofactor.

Functionally, the glycine cleavage system catalyzes the degradation of glycine. The H protein shuttles the methylamine group of glycine from the P protein to the T protein. This chain is Glycine cleavage system H protein, found in Chlorobium phaeobacteroides (strain BS1).